A 1135-amino-acid polypeptide reads, in one-letter code: LRR receptor-like serine/threonine-protein kinase RGI2 (1135 aa).

An N-terminal signal peptide occupies residues 1–35 (MSLQMPIPRKKALTVSHFSITLSLFLAFFISSTSA). At 36–723 (STNEVSALIS…QRGVHSHRLR (688 aa)) the chain is on the extracellular side. Cysteine 69 and cysteine 76 are disulfide-bonded. Asparagine 101 and asparagine 117 each carry an N-linked (GlcNAc...) asparagine glycan. LRR repeat units follow at residues 105–129 (FTSL…IGDC), 130–153 (SELI…LGKL), 154–177 (KNLQ…LGDC), and 179–203 (SLKN…KIST). 4 short sequence motifs (small peptide recognition) span residues 186–187 (FD), 208–211 (RAGG), 231–236 (VLGLAA), and tyrosine 259. LRR repeat units lie at residues 226–250 (CRNL…LGQL), 251–274 (SKLQ…LGNC), 276–298 (ELIN…LGKL), 299–323 (QNLE…GFMK), 325–345 (LNAI…SFGN), 346–370 (LSNL…LSNC), 372–395 (KLVQ…GLLK), 397–418 (LNIF…LAGC), 419–442 (QNLQ…LFQL), 444–466 (NLTK…IGNC), 467–490 (TSLV…IGFL), 491–514 (QNLS…ISNC), 516–538 (QLQM…LSSL), 539–562 (TKLQ…LGHL), 564–586 (SLNR…LGHC), 587–610 (TNLQ…LFDI), 612–634 (DLDI…RISA), 635–658 (LNRL…LSGL), and 659–683 (ENLV…VFRQ). Asparagine 273 carries N-linked (GlcNAc...) asparagine glycosylation. A Small peptide recognition motif is present at residues 281 to 283 (FLY). Positions 329–332 (DLSM) match the Small peptide recognition motif. Asparagine 345 is a glycosylation site (N-linked (GlcNAc...) asparagine). The Small peptide recognition motif lies at 351-353 (ELM). N-linked (GlcNAc...) asparagine glycans are attached at residues asparagine 358 and asparagine 369. Short sequence motifs (small peptide recognition) lie at residues 399–403 (IFLGW) and 425–428 (DLSQ). The N-linked (GlcNAc...) asparagine glycan is linked to asparagine 444. Positions 447 to 451 (KLLLI) match the Small peptide recognition motif. Asparagine 465 carries N-linked (GlcNAc...) asparagine glycosylation. Positions 471-473 (RLR) match the Small peptide recognition motif. N-linked (GlcNAc...) asparagine glycans are attached at residues asparagine 492, asparagine 502, asparagine 521, and asparagine 524. 2 N-linked (GlcNAc...) asparagine glycosylation sites follow: asparagine 598 and asparagine 618. N-linked (GlcNAc...) asparagine glycans are attached at residues asparagine 665 and asparagine 707. A helical membrane pass occupies residues 724 to 744 (IAIGLLISVTAVLAVLGVLAV). At 745-1135 (IRAKQMIRDD…ATSNVRPNLK (391 aa)) the chain is on the cytoplasmic side. At threonine 777 the chain carries Phosphothreonine. Residues 785–1066 (LVEGNVIGKG…KDVAAMLSEI (282 aa)) form the Protein kinase domain. Residues 791-799 (IGKGCSGIV) and lysine 813 contribute to the ATP site. Phosphotyrosine is present on residues tyrosine 868 and tyrosine 907. Aspartate 920 serves as the catalytic Proton acceptor. Phosphotyrosine is present on residues tyrosine 963 and tyrosine 970. Residues 1077–1135 (DGCSGSCNNGRERGKDDSTSSVMQQTAKYLRSSSTSFSASSLLYSSSSSATSNVRPNLK) are disordered. Over residues 1108-1128 (SSSTSFSASSLLYSSSSSATS) the composition is skewed to low complexity.

Belongs to the protein kinase superfamily. Ser/Thr protein kinase family. As to quaternary structure, binds to RGF peptides such as RGF1, GLV5/CLEL1/RGF2, GLV7/CLEL3/RGF3, GLV3/RGF4, GLV10/CLEL7/RGF5 and RGF10/CLELN; these interactions trigger the formation of heterodimers with SERK1. Interacts with UBP13. Post-translationally, phosphorylated and ubiquitinated upon interaction with RGF1, thus leading to activation a subsequent degradation. Stabilized by UBP12 and UBP13-mediated deubiquitination. In terms of processing, autophosphorylated. In terms of tissue distribution, specific to root meristems, especially in lateral root meristems (LRM).

It localises to the membrane. It carries out the reaction L-seryl-[protein] + ATP = O-phospho-L-seryl-[protein] + ADP + H(+). The catalysed reaction is L-threonyl-[protein] + ATP = O-phospho-L-threonyl-[protein] + ADP + H(+). In terms of biological role, together with RGI1, RGI3, RGI4 and RGI5, acts as a receptor of RGF peptides (e.g. RGF1, GLV5/CLEL1/RGF2, GLV7/CLEL3/RGF3, GLV3/RGF4, GLV10/CLEL7/RGF5 and RGF10/CLELN), peptide hormones which maintain the postembryonic root stem cell niche by regulating the expression levels and patterns of the transcription factor PLETHORA (PLT, e.g. PLT1 and PLT2). Links RGF peptides signal with their downstream components. The protein is LRR receptor-like serine/threonine-protein kinase RGI2 of Arabidopsis thaliana (Mouse-ear cress).